A 71-amino-acid chain; its full sequence is Large ribosomal subunit protein uL29 (71 aa).

The protein belongs to the universal ribosomal protein uL29 family.

The polypeptide is Large ribosomal subunit protein uL29 (Rickettsia typhi (strain ATCC VR-144 / Wilmington)).